Here is a 132-residue protein sequence, read N- to C-terminus: MDVTRLLLATLLVFLCFFTVYSHLPPEEKLRDDRSLRSNSSVNLLDFPSVSIVALNKKSKHISRKEAEKKRSSKKEASMKKVARPRTPLSAPCVATRDSCKPPAPACCDPCASCQCRFFRSACSCRVLSLNC.

The N-terminal stretch at methionine 1–serine 22 is a signal peptide. Asparagine 39 carries N-linked (GlcNAc...) asparagine glycosylation. The tract at residues histidine 61–threonine 87 is disordered. A compositionally biased stretch (basic and acidic residues) spans arginine 64–methionine 79. Intrachain disulfides connect cysteine 93–cysteine 108, cysteine 100–cysteine 114, cysteine 107–cysteine 125, cysteine 111–cysteine 132, and cysteine 116–cysteine 123. The region spanning cysteine 93 to cysteine 132 is the Agouti domain.

The protein localises to the secreted. Involved in the regulation of melanogenesis. The binding of ASP to MC1R precludes alpha-MSH initiated signaling and thus blocks production of cAMP, leading to a down-regulation of eumelanogenesis (brown/black pigment) and thus increasing synthesis of pheomelanin (yellow/red pigment). This is Agouti-signaling protein (ASIP) from Colobus polykomos (Western black-and-white colobus monkey).